The sequence spans 119 residues: uncharacterized protein (119 aa).

This is an uncharacterized protein from Homo sapiens (Human).